The following is a 3418-amino-acid chain: Breast cancer type 2 susceptibility protein (3418 aa).

An interaction with PALB2 region spans residues 1–40 (MPIGSKERPTFFEIFKTRCNKADLGPISLNWFEELSSEAP). Residues 37–68 (SEAPPYNSEPAEESEHKNNNYEPNLFKTPQRK) form a disordered region. Serine 70 carries the phosphoserine modification. Positions 358-381 (VEPNDTDPLDSNVANQKPFESGSD) are disordered. Phosphoserine is present on residues serine 445, serine 492, and serine 755. The tract at residues 639–1000 (LHSSVKRSCS…NKWAGLLGPI (362 aa)) is interaction with NPM1. 6 BRCA2 repeats span residues 1002–1036 (NHSF…DIEE), 1212–1246 (NEVG…DIEN), 1421–1455 (FETS…QKPE), 1517–1551 (KEPT…EKEQ), 1664–1698 (IENS…EGIF), and 1837–1871 (FEVG…DSFS). Residues 1003 to 2082 (HSFGGSFRTA…LHKVKGVLEE (1080 aa)) are interaction with RAD51. An interaction with POLH region spans residues 1338–1781 (GSDSSKNDTV…IEPVLKNVED (444 aa)). The interval 1410 to 1595 (TATKTEQNIK…TAAPKCKEMQ (186 aa)) is required for stimulation of POLH DNA polymerization activity. At serine 1970 the chain carries Phosphoserine. One copy of the BRCA2 7 repeat lies at 1971 to 2005 (SANTCGIFSTASGKSVQVSDASLQNARQVFSEIED). Threonine 2035 carries the phosphothreonine modification. Residues 2051–2085 (NSSAFSGFSTASGKQVSILESSLHKVKGVLEEFDL) form a BRCA2 8 repeat. Serine 2095 is subject to Phosphoserine. Positions 2270–2337 (GKRRGEPLIL…EPITCVPFRT (68 aa)) are interaction with HSF2BP. The tract at residues 2350–2545 (TAPGQEFLSK…SHKQLYTYGV (196 aa)) is interaction with FANCD2. The disordered stretch occupies residues 2430 to 2450 (ENRQKQNIDGHGSDDSKNKIN). The interval 2481-2832 (ITSLQNARDI…QRAYPIQWME (352 aa)) is interaction with SEM1. The Nuclear export signal; masked by interaction with SEM1 motif lies at 2682-2698 (AAKTLVLCVSDIISLSA). Serine 3291 is modified (phosphoserine; by CDK1 and CDK2). At serine 3319 the chain carries Phosphoserine. Threonine 3387 is modified (phosphothreonine; by CHEK1 and CHEK2). The disordered stretch occupies residues 3393 to 3418 (EQESSQASTEECEKNKQDTITTKKYI).

Monomer and dimer. Interacts with RAD51; regulates RAD51 recruitment and function at sites of DNA repair. Interacts with WDR16, USP11, DMC1, ROCK2 and NPM1. Interacts with SEM1; the interaction masks a nuclear export signal in BRCA2. Interacts with both nonubiquitinated and monoubiquitinated FANCD2; this complex also includes XRCC3 and phosphorylated FANCG. Part of a BRCA complex containing BRCA1, BRCA2 and PALB2. Component of the homologous recombination repair (HR) complex composed of ERCC5/XPG, BRCA2, PALB2, DSS1 and RAD51. Within the complex, interacts with ERCC5/XPG and PALB2. Interacts directly with PALB2 which may serve as a scaffold for a HR complex containing PALB2, BRCA2, RAD51C, RAD51 and XRCC3. Interacts with BRCA1 only in the presence of PALB2 which serves as the bridging protein. Interacts with POLH; the interaction is direct. Interacts with the TREX-2 complex subunits PCID2 and SEM1. Interacts with HSF2BP and BRME1; the interaction with HSF2BP is direct and allows the formation of a ternary complex. The complex BRME1:HSF2BP:BRCA2 interacts with SPATA22, MEIOB and RAD51. Phosphorylated by ATM upon irradiation-induced DNA damage. Phosphorylation by CHEK1 and CHEK2 regulates interaction with RAD51. Phosphorylation at Ser-3291 by CDK1 and CDK2 is low in S phase when recombination is active, but increases as cells progress towards mitosis; this phosphorylation prevents homologous recombination-dependent repair during S phase and G2 by inhibiting RAD51 binding. In terms of processing, ubiquitinated in the absence of DNA damage; this does not lead to proteasomal degradation. In contrast, ubiquitination in response to DNA damage leads to proteasomal degradation. Highest levels of expression in breast and thymus, with slightly lower levels in lung, ovary and spleen.

The protein resides in the nucleus. The protein localises to the cytoplasm. Its subcellular location is the cytoskeleton. It localises to the microtubule organizing center. It is found in the centrosome. Its function is as follows. Involved in double-strand break repair and/or homologous recombination. Binds RAD51 and potentiates recombinational DNA repair by promoting assembly of RAD51 onto single-stranded DNA (ssDNA). Acts by targeting RAD51 to ssDNA over double-stranded DNA, enabling RAD51 to displace replication protein-A (RPA) from ssDNA and stabilizing RAD51-ssDNA filaments by blocking ATP hydrolysis. Part of a PALB2-scaffolded HR complex containing RAD51C and which is thought to play a role in DNA repair by HR. May participate in S phase checkpoint activation. Binds selectively to ssDNA, and to ssDNA in tailed duplexes and replication fork structures. May play a role in the extension step after strand invasion at replication-dependent DNA double-strand breaks; together with PALB2 is involved in both POLH localization at collapsed replication forks and DNA polymerization activity. In concert with NPM1, regulates centrosome duplication. Interacts with the TREX-2 complex (transcription and export complex 2) subunits PCID2 and SEM1, and is required to prevent R-loop-associated DNA damage and thus transcription-associated genomic instability. Silencing of BRCA2 promotes R-loop accumulation at actively transcribed genes in replicating and non-replicating cells, suggesting that BRCA2 mediates the control of R-loop associated genomic instability, independently of its known role in homologous recombination. The polypeptide is Breast cancer type 2 susceptibility protein (Homo sapiens (Human)).